The chain runs to 286 residues: Urease accessory protein UreD 2 (286 aa).

The protein belongs to the UreD family. UreD, UreF and UreG form a complex that acts as a GTP-hydrolysis-dependent molecular chaperone, activating the urease apoprotein by helping to assemble the nickel containing metallocenter of UreC. The UreE protein probably delivers the nickel.

It is found in the cytoplasm. Functionally, required for maturation of urease via the functional incorporation of the urease nickel metallocenter. This Bradyrhizobium sp. (strain ORS 278) protein is Urease accessory protein UreD 2.